The chain runs to 349 residues: Anthranilate phosphoribosyltransferase (349 aa).

5-phospho-alpha-D-ribose 1-diphosphate-binding positions include Gly-87, 90 to 91, Thr-95, 97 to 100, 115 to 123, and Ser-127; these read GD, NIST, and KHGNRSVSS. Gly-87 lines the anthranilate pocket. Ser-99 contacts Mg(2+). Asn-118 contributes to the anthranilate binding site. Arg-173 contacts anthranilate. Mg(2+)-binding residues include Asp-231 and Glu-232.

Belongs to the anthranilate phosphoribosyltransferase family. In terms of assembly, homodimer. Mg(2+) is required as a cofactor.

The catalysed reaction is N-(5-phospho-beta-D-ribosyl)anthranilate + diphosphate = 5-phospho-alpha-D-ribose 1-diphosphate + anthranilate. It functions in the pathway amino-acid biosynthesis; L-tryptophan biosynthesis; L-tryptophan from chorismate: step 2/5. Its function is as follows. Catalyzes the transfer of the phosphoribosyl group of 5-phosphorylribose-1-pyrophosphate (PRPP) to anthranilate to yield N-(5'-phosphoribosyl)-anthranilate (PRA). The sequence is that of Anthranilate phosphoribosyltransferase from Shewanella loihica (strain ATCC BAA-1088 / PV-4).